An 876-amino-acid polypeptide reads, in one-letter code: Monofunctional isopimaradiene synthase, chloroplastic (876 aa).

The transit peptide at 1-64 (MAMPSYSSLS…YLRLGSRKII (64 aa)) directs the protein to the chloroplast. 5 residues coordinate Mg(2+): Asp-628, Asp-632, Asn-772, Thr-776, and Glu-780. The DDXXD motif signature appears at 628 to 632 (DDLYD).

It belongs to the terpene synthase family. Tpsd subfamily. Mg(2+) serves as cofactor.

It localises to the plastid. The protein localises to the chloroplast. The enzyme catalyses (+)-copalyl diphosphate = isopimara-7,15-diene + diphosphate. The protein operates within terpene metabolism; oleoresin biosynthesis. Its function is as follows. Involved in defensive oleoresin formation in conifers in response to insect attack or other injury. Involved in diterpene (C20) olefins biosynthesis. Monofunctional enzyme lacking the DXDD motif in the class II active site relevant for the cyclization of geranylgeranyl diphosphate (GGPP). Requires (+)-copalyl diphosphate ((+)-CPP) as substrate, but no activity with GGPP or ent-CPP. Isopimaradiene is the major products of the enzyme followed by sandaracopimaradiene. The polypeptide is Monofunctional isopimaradiene synthase, chloroplastic (Pinus banksiana (Jack pine)).